The chain runs to 325 residues: N-acetyl-gamma-glutamyl-phosphate reductase (325 aa).

Cys131 is a catalytic residue.

The protein belongs to the NAGSA dehydrogenase family. Type 1 subfamily.

It is found in the cytoplasm. The catalysed reaction is N-acetyl-L-glutamate 5-semialdehyde + phosphate + NADP(+) = N-acetyl-L-glutamyl 5-phosphate + NADPH + H(+). It participates in amino-acid biosynthesis; L-arginine biosynthesis; N(2)-acetyl-L-ornithine from L-glutamate: step 3/4. Its function is as follows. Catalyzes the NADPH-dependent reduction of N-acetyl-5-glutamyl phosphate to yield N-acetyl-L-glutamate 5-semialdehyde. The chain is N-acetyl-gamma-glutamyl-phosphate reductase from Methylobacterium sp. (strain 4-46).